Reading from the N-terminus, the 156-residue chain is Small ribosomal subunit protein uS7 (156 aa).

This sequence belongs to the universal ribosomal protein uS7 family. As to quaternary structure, part of the 30S ribosomal subunit. Contacts proteins S9 and S11.

Functionally, one of the primary rRNA binding proteins, it binds directly to 16S rRNA where it nucleates assembly of the head domain of the 30S subunit. Is located at the subunit interface close to the decoding center, probably blocks exit of the E-site tRNA. This is Small ribosomal subunit protein uS7 from Aliivibrio salmonicida (strain LFI1238) (Vibrio salmonicida (strain LFI1238)).